Consider the following 97-residue polypeptide: Ferredoxin-like protein YdiT (97 aa).

This sequence belongs to the bacterial-type ferredoxin family. FixX subfamily.

Its function is as follows. Could be a 3Fe-4S cluster-containing protein. Probably participates in a redox process with YdiQ, YdiR and YdiS. In Escherichia coli (strain K12), this protein is Ferredoxin-like protein YdiT (ydiT).